The primary structure comprises 1101 residues: Lysylphosphatidylglycerol biosynthesis bifunctional protein LysX (1101 aa).

The interval methionine 1–aspartate 601 is phosphatidylglycerol lysyltransferase. 7 helical membrane passes run valine 18 to valine 38, phenylalanine 60 to alanine 80, isoleucine 84 to leucine 104, aspartate 113 to alanine 133, valine 151 to phenylalanine 171, tyrosine 183 to serine 200, and valine 207 to phenylalanine 227. The lysine--tRNA ligase stretch occupies residues arginine 602–arginine 1101. The segment at residues valine 662–isoleucine 740 is a DNA-binding region (OB). Positions 1013 and 1020 each coordinate Mg(2+).

The protein in the N-terminal section; belongs to the LPG synthetase family. This sequence in the C-terminal section; belongs to the class-II aminoacyl-tRNA synthetase family. It depends on Mg(2+) as a cofactor.

The protein resides in the cell membrane. It catalyses the reaction tRNA(Lys) + L-lysine + ATP = L-lysyl-tRNA(Lys) + AMP + diphosphate. It carries out the reaction L-lysyl-tRNA(Lys) + a 1,2-diacyl-sn-glycero-3-phospho-(1'-sn-glycerol) = a 1,2-diacyl-sn-glycero-3-phospho-1'-(3'-O-L-lysyl)-sn-glycerol + tRNA(Lys). Catalyzes the production of L-lysyl-tRNA(Lys)transfer and the transfer of a lysyl group from L-lysyl-tRNA(Lys) to membrane-bound phosphatidylglycerol (PG), which produces lysylphosphatidylglycerol (LPG), one of the components of the bacterial membrane with a positive net charge. LPG synthesis contributes to the resistance to cationic antimicrobial peptides (CAMPs) and likely protects M.tuberculosis against the CAMPs produced by competiting microorganisms (bacteriocins). In fact, the modification of anionic phosphatidylglycerol with positively charged L-lysine results in repulsion of the peptides. The protein is Lysylphosphatidylglycerol biosynthesis bifunctional protein LysX (lysX) of Mycolicibacterium gilvum (strain PYR-GCK) (Mycobacterium gilvum (strain PYR-GCK)).